Here is a 218-residue protein sequence, read N- to C-terminus: Adenylate kinase (218 aa).

10-15 (GAGKGT) lines the ATP pocket. Positions 30–59 (STGDMLRAAVKAGTPLGQQAKAVMESGGLV) are NMP. AMP-binding positions include threonine 31, arginine 36, 57-59 (GLV), 85-88 (GFPR), and glutamine 92. The segment at 122-159 (GRRSHPASGRTYHVKFNPPKVEGKDDITGEDLIQRKDD) is LID. Residues arginine 123 and 132–133 (TY) contribute to the ATP site. Residues arginine 156 and arginine 167 each contribute to the AMP site. Residue glycine 203 coordinates ATP.

It belongs to the adenylate kinase family. In terms of assembly, monomer.

Its subcellular location is the cytoplasm. The catalysed reaction is AMP + ATP = 2 ADP. It participates in purine metabolism; AMP biosynthesis via salvage pathway; AMP from ADP: step 1/1. In terms of biological role, catalyzes the reversible transfer of the terminal phosphate group between ATP and AMP. Plays an important role in cellular energy homeostasis and in adenine nucleotide metabolism. In Variovorax paradoxus (strain S110), this protein is Adenylate kinase.